We begin with the raw amino-acid sequence, 68 residues long: MVYYPERFVWVSQEPFPNKNMEGRLPKGRLPVPKEVNRKKNDETNAASLTPLGSSELRSPRISYLHFF.

Residues 21-54 (MEGRLPKGRLPVPKEVNRKKNDETNAASLTPLGS) are disordered. Residues 44–54 (TNAASLTPLGS) are compositionally biased toward polar residues.

In terms of assembly, interacts with the latency-associated peptides (LAP) of TGFB1 and TGFB2; the interaction results in a decrease in TGFB autoinduction. Interacts with FLNA. In terms of processing, phosphorylated on Ser-59. Phosphorylation decreases stability and activity.

Its subcellular location is the cytoplasm. Functionally, may have roles in neural function and cellular differentiation. Ectopic expression promotes axonal regeneration, induces differentiation of fibroblast into myofibroblast, induces myofibroblast ameboid migration, augments motility of gliomas, and increases retinoic-acid regulation of lipid-droplet biogenesis. Down-regulates the expression of TGFB1 and TGFB2 but not of TGFB3. May play a role in the regulation of alveolar generation. The polypeptide is Neuronal regeneration-related protein (NREP) (Macaca fascicularis (Crab-eating macaque)).